A 135-amino-acid chain; its full sequence is Class I hydrophobin dewB (135 aa).

The signal sequence occupies residues 1–17; it reads MKFIGLATLSLFALASA. Cystine bridges form between Cys35–Cys109, Cys43–Cys103, Cys44–Cys84, and Cys110–Cys128.

The protein belongs to the fungal hydrophobin family. In terms of assembly, self-assembles to form functional amyloid fibrils called rodlets. Self-assembly into fibrillar rodlets occurs spontaneously at hydrophobic:hydrophilic interfaces and the rodlets further associate laterally to form amphipathic monolayers.

It is found in the secreted. Its subcellular location is the spore wall. Functionally, aerial growth, conidiation, and dispersal of filamentous fungi in the environment rely upon a capability of their secreting small amphipathic proteins called hydrophobins (HPBs) with low sequence identity. Class I can self-assemble into an outermost layer of rodlet bundles on aerial cell surfaces, conferring cellular hydrophobicity that supports fungal growth, development and dispersal; whereas Class II form highly ordered films at water-air interfaces through intermolecular interactions but contribute nothing to the rodlet structure. DewB is a class I hydrophobin that contributes to the hydrophobicity of the spore surface. The chain is Class I hydrophobin dewB from Emericella nidulans (strain FGSC A4 / ATCC 38163 / CBS 112.46 / NRRL 194 / M139) (Aspergillus nidulans).